The chain runs to 297 residues: uncharacterized protein (297 aa).

Glu46 is an active-site residue.

The protein belongs to the PhzF family. Homodimer and homotetramer.

This is an uncharacterized protein from Salmonella typhimurium (strain LT2 / SGSC1412 / ATCC 700720).